Here is a 458-residue protein sequence, read N- to C-terminus: tRNA-2-methylthio-N(6)-dimethylallyladenosine synthase (458 aa).

In terms of domain architecture, MTTase N-terminal spans 15 to 134 (KKVFIKTYGC…LPDLLEQTKQ (120 aa)). [4Fe-4S] cluster contacts are provided by C24, C60, C97, C175, C179, and C182. The region spanning 161–393 (RKRGVSAFLT…QVLLLEQQNA (233 aa)) is the Radical SAM core domain. The 62-residue stretch at 396–457 (RSKIGQTTDV…SNSFVGEIAN (62 aa)) folds into the TRAM domain.

Belongs to the methylthiotransferase family. MiaB subfamily. In terms of assembly, monomer. [4Fe-4S] cluster serves as cofactor.

It localises to the cytoplasm. The enzyme catalyses N(6)-dimethylallyladenosine(37) in tRNA + (sulfur carrier)-SH + AH2 + 2 S-adenosyl-L-methionine = 2-methylsulfanyl-N(6)-dimethylallyladenosine(37) in tRNA + (sulfur carrier)-H + 5'-deoxyadenosine + L-methionine + A + S-adenosyl-L-homocysteine + 2 H(+). In terms of biological role, catalyzes the methylthiolation of N6-(dimethylallyl)adenosine (i(6)A), leading to the formation of 2-methylthio-N6-(dimethylallyl)adenosine (ms(2)i(6)A) at position 37 in tRNAs that read codons beginning with uridine. This chain is tRNA-2-methylthio-N(6)-dimethylallyladenosine synthase, found in Bartonella quintana (strain Toulouse) (Rochalimaea quintana).